Here is a 106-residue protein sequence, read N- to C-terminus: L-rhamnose mutarotase (106 aa).

Tyr20 provides a ligand contact to substrate. His24 (proton donor) is an active-site residue. Substrate is bound by residues Tyr43 and 78 to 79; that span reads WW.

This sequence belongs to the rhamnose mutarotase family. Homodimer.

The protein localises to the cytoplasm. The catalysed reaction is alpha-L-rhamnose = beta-L-rhamnose. Its pathway is carbohydrate metabolism; L-rhamnose metabolism. Functionally, involved in the anomeric conversion of L-rhamnose. The protein is L-rhamnose mutarotase of Rhizobium etli (strain ATCC 51251 / DSM 11541 / JCM 21823 / NBRC 15573 / CFN 42).